The primary structure comprises 322 residues: UV DNA damage endonuclease (322 aa).

This sequence belongs to the uve1/UvsE family.

Functionally, component in a DNA repair pathway. Removal of UV LIGHT damaged nucleotides. Recognizes pyrimidine dimers and cleave a phosphodiester bond immediately 5' to the lesion. In Halalkalibacterium halodurans (strain ATCC BAA-125 / DSM 18197 / FERM 7344 / JCM 9153 / C-125) (Bacillus halodurans), this protein is UV DNA damage endonuclease.